We begin with the raw amino-acid sequence, 203 residues long: uncharacterized protein (203 aa).

The protein belongs to the mimivirus L332/L333/L334 family.

This is an uncharacterized protein from Acanthamoeba polyphaga mimivirus (APMV).